Reading from the N-terminus, the 425-residue chain is Bifunctional phosphoribosylaminoimidazole carboxylase/phosphoribosylaminoimidazole succinocarboxamide synthetase (425 aa).

Ala-2 bears the N-acetylalanine mark. Positions 2–260 (ATAEVLNIGK…WVAERVELLL (259 aa)) are SAICAR synthetase domain. Tyr-22 is modified (phosphotyrosine). Ser-27 carries the post-translational modification Phosphoserine. Lys-36 carries the N6-acetyllysine modification. The residue at position 107 (Ser-107) is a Phosphoserine. A Phosphothreonine modification is found at Thr-238. The residue at position 247 (Lys-247) is an N6-acetyllysine. Residues 261 to 266 (KSESQC) are linker. The segment at 267-425 (RVVVLMGSTS…ADKKIRECNL (159 aa)) is AIR carboxylase domain. Residue Ser-274 is modified to Phosphoserine. Ser-332 contributes to the CO2 binding site.

It in the N-terminal section; belongs to the SAICAR synthetase family. In the C-terminal section; belongs to the AIR carboxylase family. Class II subfamily. As to quaternary structure, homooctamer.

It carries out the reaction 5-amino-1-(5-phospho-D-ribosyl)imidazole-4-carboxylate + L-aspartate + ATP = (2S)-2-[5-amino-1-(5-phospho-beta-D-ribosyl)imidazole-4-carboxamido]succinate + ADP + phosphate + 2 H(+). It catalyses the reaction 5-amino-1-(5-phospho-D-ribosyl)imidazole-4-carboxylate + H(+) = 5-amino-1-(5-phospho-beta-D-ribosyl)imidazole + CO2. It functions in the pathway purine metabolism; IMP biosynthesis via de novo pathway; 5-amino-1-(5-phospho-D-ribosyl)imidazole-4-carboxamide from 5-amino-1-(5-phospho-D-ribosyl)imidazole-4-carboxylate: step 1/2. The protein operates within purine metabolism; IMP biosynthesis via de novo pathway; 5-amino-1-(5-phospho-D-ribosyl)imidazole-4-carboxylate from 5-amino-1-(5-phospho-D-ribosyl)imidazole (carboxylase route): step 1/1. Bifunctional phosphoribosylaminoimidazole carboxylase and phosphoribosylaminoimidazole succinocarboxamide synthetase catalyzing two reactions of the de novo purine biosynthetic pathway. The sequence is that of Bifunctional phosphoribosylaminoimidazole carboxylase/phosphoribosylaminoimidazole succinocarboxamide synthetase from Homo sapiens (Human).